A 692-amino-acid chain; its full sequence is Tripartite terminase subunit 1 (692 aa).

Residues cysteine 190 to histidine 218 form a C3H1-type zinc finger. Tyrosine 634–arginine 641 is a binding site for ATP.

Belongs to the herpesviridae TRM1 protein family. In terms of assembly, associates with TRM2 and TRM3 to form the tripartite terminase complex. Interacts with portal protein.

It is found in the host nucleus. Component of the molecular motor that translocates viral genomic DNA in empty capsid during DNA packaging. Forms a tripartite terminase complex together with TRM2 and TRM3 in the host cytoplasm. Once the complex reaches the host nucleus, it interacts with the capsid portal vertex. This portal forms a ring in which genomic DNA is translocated into the capsid. TRM1 carries an endonuclease activity that plays an important role for the cleavage of concatemeric viral DNA into unit length genomes. The protein is Tripartite terminase subunit 1 of Elephas maximus (Indian elephant).